The following is a 444-amino-acid chain: MRELVHIQGGQCGNQIGAKFWEVISDEHGVDPTGSYHGDSDLQLERINVYYNEATGGRYVPRAILMDLEPGTMDSVRAGPYGQLFRPDNFVFGQTGAGNNWAKGHYTEGAELIDSVLDVVRKEAESCDCLQGFQITHSLGGGTGSGMGTLLISKIREEYPDRIMCTYSVCPSPKVSDTVVEPYNATLSVHQLVENADEVMCLDNEALYDICFRTLKLTNPTYGDLNHLVCAAMSGITTCLRFPGQLNSVLKLFAVNLIPFPRLHFFMIGFAPLTSRGSQQYRALTVPELTQQQFDAKNMMCAADPRHGRYLTAACMFRGRMSTKEVDEQMLNVQNKNSSYFVEWIPNNIKASVCDIPPQGLKMSTTFIGNSTAIQEMFKRVSEQFTAMFRRKAFLHWYTGEGMDEMEFTEAESNMNDLVSEYQQYQDGTAEEEGEFDEDEEWMR.

GTP contacts are provided by Gln-11, Glu-69, Ser-138, Gly-142, Thr-143, Gly-144, Asn-204, and Asn-226. A Mg(2+)-binding site is contributed by Glu-69.

Belongs to the tubulin family. Dimer of alpha and beta chains. A typical microtubule is a hollow water-filled tube with an outer diameter of 25 nm and an inner diameter of 15 nM. Alpha-beta heterodimers associate head-to-tail to form protofilaments running lengthwise along the microtubule wall with the beta-tubulin subunit facing the microtubule plus end conferring a structural polarity. Microtubules usually have 13 protofilaments but different protofilament numbers can be found in some organisms and specialized cells. Mg(2+) is required as a cofactor.

The protein resides in the cytoplasm. It is found in the cytoskeleton. Tubulin is the major constituent of microtubules, a cylinder consisting of laterally associated linear protofilaments composed of alpha- and beta-tubulin heterodimers. Microtubules grow by the addition of GTP-tubulin dimers to the microtubule end, where a stabilizing cap forms. Below the cap, tubulin dimers are in GDP-bound state, owing to GTPase activity of alpha-tubulin. This is Tubulin beta chain from Phytophthora cinnamomi (Cinnamon fungus).